The following is a 501-amino-acid chain: Glycerol kinase (501 aa).

Threonine 17 provides a ligand contact to ADP. 3 residues coordinate ATP: threonine 17, threonine 18, and serine 19. Threonine 17 contacts sn-glycerol 3-phosphate. Residue arginine 21 coordinates ADP. Positions 87, 88, 139, and 243 each coordinate sn-glycerol 3-phosphate. Positions 87, 88, 139, 243, and 244 each coordinate glycerol. ADP is bound by residues threonine 265 and glycine 308. Positions 265, 308, 312, and 409 each coordinate ATP. Residues glycine 409 and asparagine 413 each contribute to the ADP site.

Belongs to the FGGY kinase family.

The enzyme catalyses glycerol + ATP = sn-glycerol 3-phosphate + ADP + H(+). The protein operates within polyol metabolism; glycerol degradation via glycerol kinase pathway; sn-glycerol 3-phosphate from glycerol: step 1/1. With respect to regulation, inhibited by fructose 1,6-bisphosphate (FBP). Functionally, key enzyme in the regulation of glycerol uptake and metabolism. Catalyzes the phosphorylation of glycerol to yield sn-glycerol 3-phosphate. In Pseudomonas syringae pv. syringae (strain B728a), this protein is Glycerol kinase.